Here is a 124-residue protein sequence, read N- to C-terminus: Large ribosomal subunit protein bL12 (124 aa).

The protein belongs to the bacterial ribosomal protein bL12 family. As to quaternary structure, homodimer. Part of the ribosomal stalk of the 50S ribosomal subunit. Forms a multimeric L10(L12)X complex, where L10 forms an elongated spine to which 2 to 4 L12 dimers bind in a sequential fashion. Binds GTP-bound translation factors.

Forms part of the ribosomal stalk which helps the ribosome interact with GTP-bound translation factors. Is thus essential for accurate translation. The polypeptide is Large ribosomal subunit protein bL12 (Paracoccus denitrificans (strain Pd 1222)).